The chain runs to 567 residues: ERO1-like protein 2 (567 aa).

The first 22 residues, 1–22 (MKIAKGLVGLLILYKNVCQVLC), serve as a signal peptide directing secretion. Asn-49 is a glycosylation site (N-linked (GlcNAc...) asparagine). Cystine bridges form between Cys-88–Cys-386, Cys-98–Cys-103, Cys-154–Cys-325, and Cys-389–Cys-392. 6 residues coordinate FAD: Arg-188, Thr-190, Trp-201, Ser-258, His-261, and Lys-290. Catalysis depends on Cys-389, which acts as the Nucleophile. The active site involves Cys-392. A glycan (N-linked (GlcNAc...) asparagine) is linked at Asn-546.

The protein belongs to the EROs family. May function both as a monomer and a homodimer. It depends on FAD as a cofactor. Post-translationally, N-glycosylated.

It is found in the endoplasmic reticulum membrane. Functionally, essential oxidoreductase that oxidizes proteins in the endoplasmic reticulum to produce disulfide bonds. Acts by oxidizing directly pdi1 isomerase through a direct disulfide exchange. Does not act as a direct oxidant of folding substrate, but relies on pdi1 to transfer oxidizing equivalent. Does not oxidize all pdi related proteins, suggesting that it can discriminate between pdi1 and related proteins. Its reoxidation probably involves electron transfer to molecular oxygen via FAD. Acts independently of glutathione. May be responsible for a significant proportion of reactive oxygen species (ROS) in the cell, thereby being a source of oxidative stress. This chain is ERO1-like protein 2 (ero12), found in Schizosaccharomyces pombe (strain 972 / ATCC 24843) (Fission yeast).